The chain runs to 212 residues: uncharacterized protein (212 aa).

This is an uncharacterized protein from Saccharolobus islandicus (Sulfolobus islandicus).